A 545-amino-acid chain; its full sequence is Threonine--tRNA ligase catalytic subunit (545 aa).

Residues 139 to 433 (DHRLIGEKLD…LLEHFKGKLP (295 aa)) are catalytic. Residues cysteine 231, histidine 282, and histidine 410 each coordinate Zn(2+).

Belongs to the class-II aminoacyl-tRNA synthetase family. In terms of assembly, homodimer. Probably interacts with its editing subunit. Requires Zn(2+) as cofactor.

It localises to the cytoplasm. The enzyme catalyses tRNA(Thr) + L-threonine + ATP = L-threonyl-tRNA(Thr) + AMP + diphosphate + H(+). Functionally, catalyzes the attachment of threonine to tRNA(Thr) in a two-step reaction: L-threonine is first activated by ATP to form Thr-AMP and then transferred to the acceptor end of tRNA(Thr). Also activates L-serine and transfers it to tRNA(Thr) but cannot deacylate incorrectly charged amino acid; unlike most archaea the editing function is found in a freestanding protein. The polypeptide is Threonine--tRNA ligase catalytic subunit (Saccharolobus islandicus (strain Y.G.57.14 / Yellowstone #1) (Sulfolobus islandicus)).